The primary structure comprises 64 residues: Large ribosomal subunit protein bL35 (64 aa).

This sequence belongs to the bacterial ribosomal protein bL35 family.

In Desulforamulus reducens (strain ATCC BAA-1160 / DSM 100696 / MI-1) (Desulfotomaculum reducens), this protein is Large ribosomal subunit protein bL35.